We begin with the raw amino-acid sequence, 564 residues long: Septation ring formation regulator EzrA (564 aa).

At 1-2 the chain is on the extracellular side; it reads MV. The helical transmembrane segment at 3–21 threads the bilayer; the sequence is FVISVILAIIVILTIGLIL. The Cytoplasmic portion of the chain corresponds to 22 to 564; that stretch reads RKRIYDKVDH…IEENQLTLNR (543 aa). Coiled-coil stretches lie at residues 101–140, 168–215, 251–436, and 468–537; these read ANNI…REEV, FDKK…MEQF, GFDK…KKSN, and DIAK…ELSL.

It belongs to the EzrA family.

It localises to the cell membrane. Functionally, negative regulator of FtsZ ring formation; modulates the frequency and position of FtsZ ring formation. Inhibits FtsZ ring formation at polar sites. Interacts either with FtsZ or with one of its binding partners to promote depolymerization. This is Septation ring formation regulator EzrA from Oceanobacillus iheyensis (strain DSM 14371 / CIP 107618 / JCM 11309 / KCTC 3954 / HTE831).